The chain runs to 157 residues: Arginine repressor (157 aa).

Belongs to the ArgR family.

The protein localises to the cytoplasm. It participates in amino-acid biosynthesis; L-arginine biosynthesis [regulation]. In terms of biological role, regulates arginine biosynthesis genes. The polypeptide is Arginine repressor (Bacteroides fragilis (strain YCH46)).